Consider the following 384-residue polypeptide: Aryl-alcohol dehydrogenase GME11368 (384 aa).

D69 contacts NADP(+). Y74 acts as the Proton donor in catalysis. Residues 177-178 (SD), Q203, and 301-309 (RKPEHLKAN) contribute to the NADP(+) site.

It belongs to the aldo/keto reductase family. Aldo/keto reductase 2 subfamily.

It participates in secondary metabolite biosynthesis. Its function is as follows. Aryl-alcohol dehydrogenase; part of the gene cluster that mediates the biosynthesis of dibenzodioxocinones such as pestalotiollide B, a novel class of inhibitors against cholesterol ester transfer protein (CEPT). The biosynthesis initiates from condensation of acetate and malonate units catalyzed by the non-reducing PKS pks8/GME11356. Pks8/GME11356 lacks a thioesterase (TE) domain, which is important to the cyclizing of the third ring of atrochrysone carboxylic acid, and the esterase GME11355 might play the role of TE and catalyzes the cyclization reaction of the C ring. The lactamase-like protein GME11357 (or other beta-lactamases in Pestalotiopsis microspora) probably hydrolyzes the thioester bond between the ACP of pks8/GME11356 and the intermediate to release atrochrysone carboxylic acid, which is spontaneously dehydrates to form endocrocin anthrone. Endocrocin anthrone is further converted to emodin via the endocrocin intermediate. Emodin is then oxidized by several enzymes such as the Baeyer-Villiger oxidase GME11358, the oxidoreductase GME11367, the short chain dehydrogenase/reductase GME11373, as well as by other oxidoreductases from the cluster, to modify the A and C rings and open the B ring, and finally yield monodictyphenone. The prenyltransferase GME11375 may catalyze the addition reaction between the C5 side chains and the carbon bone of dibenzodioxocinones. The remaining biochemical reactions to the final product dibenzodioxocinones should be methylation catalyzed by methyltransferase GME11366 and reduction and lactonization reaction catalyzed by a series of oxidordeuctases. This chain is Aryl-alcohol dehydrogenase GME11368, found in Pestalotiopsis microspora.